The sequence spans 175 residues: MGLSLEQKKAMVQEVAAVAKEAHSAVGAEYRGLTAGQMDALRQQARENGVYLRVVKNRLAKRAVEGTEFECMQSELTGPLLLAFSLEDPGAAARVIKAYSKEHEALQTRLVAVGGQVYPASELERLASLPTREEALAMLLATMKAPVQKLATTLNEVPGKLVRTVAAVKDAKQAA.

Belongs to the universal ribosomal protein uL10 family. Part of the ribosomal stalk of the 50S ribosomal subunit. The N-terminus interacts with L11 and the large rRNA to form the base of the stalk. The C-terminus forms an elongated spine to which L12 dimers bind in a sequential fashion forming a multimeric L10(L12)X complex.

Its function is as follows. Forms part of the ribosomal stalk, playing a central role in the interaction of the ribosome with GTP-bound translation factors. In Alkalilimnicola ehrlichii (strain ATCC BAA-1101 / DSM 17681 / MLHE-1), this protein is Large ribosomal subunit protein uL10.